The following is a 70-amino-acid chain: uncharacterized protein (70 aa).

Residues 5-59 (IREFRAKYGMTQEELAKKVGVRRETIVFLEKGKYNPSLRLAYKIARVFNARIEDL) form the HTH cro/C1-type domain. Residues 16 to 35 (QEELAKKVGVRRETIVFLEK) constitute a DNA-binding region (H-T-H motif).

This is an uncharacterized protein from Archaeoglobus fulgidus (strain ATCC 49558 / DSM 4304 / JCM 9628 / NBRC 100126 / VC-16).